Here is a 177-residue protein sequence, read N- to C-terminus: RNA pyrophosphohydrolase (177 aa).

One can recognise a Nudix hydrolase domain in the interval 6-149 (GYRPNVGIVI…KRDVYRRVMK (144 aa)). Residues 38 to 59 (GGINPGESAEQAMYRELFEEVG) carry the Nudix box motif.

It belongs to the Nudix hydrolase family. RppH subfamily. The cofactor is a divalent metal cation.

Accelerates the degradation of transcripts by removing pyrophosphate from the 5'-end of triphosphorylated RNA, leading to a more labile monophosphorylated state that can stimulate subsequent ribonuclease cleavage. The protein is RNA pyrophosphohydrolase of Cronobacter sakazakii (strain ATCC BAA-894) (Enterobacter sakazakii).